Here is a 244-residue protein sequence, read N- to C-terminus: Non-structural protein 3 (244 aa).

It belongs to the aquareoviridae NS3 protein family.

The sequence is that of Non-structural protein 3 (S11) from Notemigonus crysoleucas (Golden shiner).